The chain runs to 160 residues: Small ribosomal subunit protein uS9 (160 aa).

The protein belongs to the universal ribosomal protein uS9 family.

This Mesorhizobium japonicum (strain LMG 29417 / CECT 9101 / MAFF 303099) (Mesorhizobium loti (strain MAFF 303099)) protein is Small ribosomal subunit protein uS9.